A 1150-amino-acid polypeptide reads, in one-letter code: ATP-dependent helicase/deoxyribonuclease subunit B (1150 aa).

8–15 (GRAGSGKS) contributes to the ATP binding site. Residues Cys786, Cys1106, Cys1109, and Cys1115 each coordinate [4Fe-4S] cluster.

The protein belongs to the helicase family. AddB/RexB type 1 subfamily. As to quaternary structure, heterodimer of AddA and AddB. The cofactor is Mg(2+). Requires [4Fe-4S] cluster as cofactor.

Its function is as follows. The heterodimer acts as both an ATP-dependent DNA helicase and an ATP-dependent, dual-direction single-stranded exonuclease. Recognizes the chi site generating a DNA molecule suitable for the initiation of homologous recombination. The AddB subunit has 5' -&gt; 3' nuclease activity but not helicase activity. This chain is ATP-dependent helicase/deoxyribonuclease subunit B, found in Clostridium botulinum (strain Langeland / NCTC 10281 / Type F).